A 246-amino-acid polypeptide reads, in one-letter code: Pyridoxine 5'-phosphate synthase (246 aa).

Residues Asn-8 and Arg-19 each coordinate 3-amino-2-oxopropyl phosphate. The active-site Proton acceptor is the His-44. 1-deoxy-D-xylulose 5-phosphate contacts are provided by Arg-46 and His-51. Catalysis depends on Glu-76, which acts as the Proton acceptor. Thr-106 serves as a coordination point for 1-deoxy-D-xylulose 5-phosphate. The Proton donor role is filled by His-198. 3-amino-2-oxopropyl phosphate contacts are provided by residues Asp-199 and 221–222; that span reads GH.

This sequence belongs to the PNP synthase family. Homooctamer; tetramer of dimers.

It is found in the cytoplasm. It catalyses the reaction 3-amino-2-oxopropyl phosphate + 1-deoxy-D-xylulose 5-phosphate = pyridoxine 5'-phosphate + phosphate + 2 H2O + H(+). Its pathway is cofactor biosynthesis; pyridoxine 5'-phosphate biosynthesis; pyridoxine 5'-phosphate from D-erythrose 4-phosphate: step 5/5. Functionally, catalyzes the complicated ring closure reaction between the two acyclic compounds 1-deoxy-D-xylulose-5-phosphate (DXP) and 3-amino-2-oxopropyl phosphate (1-amino-acetone-3-phosphate or AAP) to form pyridoxine 5'-phosphate (PNP) and inorganic phosphate. The sequence is that of Pyridoxine 5'-phosphate synthase from Brucella suis (strain ATCC 23445 / NCTC 10510).